The sequence spans 417 residues: D-amino acid dehydrogenase (417 aa).

FAD is bound at residue 3–17; that stretch reads VVILGSGVVGVSTAW.

This sequence belongs to the DadA oxidoreductase family. FAD is required as a cofactor.

It carries out the reaction a D-alpha-amino acid + A + H2O = a 2-oxocarboxylate + AH2 + NH4(+). It participates in amino-acid degradation; D-alanine degradation; NH(3) and pyruvate from D-alanine: step 1/1. In terms of biological role, oxidative deamination of D-amino acids. The chain is D-amino acid dehydrogenase from Pectobacterium atrosepticum (strain SCRI 1043 / ATCC BAA-672) (Erwinia carotovora subsp. atroseptica).